The following is a 416-amino-acid chain: N-carbamoyl-L-amino-acid amidohydrolase (416 aa).

A divalent metal cation is bound by residues histidine 87, aspartate 98, glutamate 133, and histidine 194. 5 residues coordinate an N-carbamoyl-L-alpha-amino acid: glutamine 197, histidine 230, asparagine 279, arginine 292, and glycine 361. Residues 213-331 (HCQGLWWLEF…SIEAVGHFDP (119 aa)) form an involved in dimerization region. Position 386 (histidine 386) interacts with a divalent metal cation.

The protein belongs to the peptidase M20 family. In terms of assembly, homodimer. Mn(2+) is required as a cofactor. Requires Ni(2+) as cofactor. The cofactor is Co(2+). It depends on Fe(2+) as a cofactor.

It carries out the reaction an N-carbamoyl-L-alpha-amino acid + H2O + 2 H(+) = an L-alpha-amino acid + NH4(+) + CO2. The enzyme catalyses N-carbamoyl-L-methionine + H2O + 2 H(+) = L-methionine + NH4(+) + CO2. It catalyses the reaction N-acetyl-L-methionine + H2O = L-methionine + acetate. The catalysed reaction is N(alpha)-formyl-L-methionine + H2O = formate + L-methionine. It carries out the reaction N-carbamoyl-L-alanine + H2O + 2 H(+) = L-alanine + NH4(+) + CO2. The enzyme catalyses N-carbamoyl-L-cysteine + H2O + 2 H(+) = L-cysteine + NH4(+) + CO2. It catalyses the reaction N-carbamoyl-L-tryptophan + H2O + 2 H(+) = L-tryptophan + NH4(+) + CO2. The catalysed reaction is N-carbamoyl-L-valine + H2O + 2 H(+) = L-valine + NH4(+) + CO2. It carries out the reaction N-carbamoyl-L-phenylalanine + H2O + 2 H(+) = L-phenylalanine + NH4(+) + CO2. With respect to regulation, strongly inhibited by Hg(2+), Cu(2+), Zn(2+), Pb(2+) and Fe(3+) ions, and slightly inhibited by Na(+) and K(+) ions. Beta-mercaptoethanol and 5,5'-dithiobis-(2-nitrobenzoic acid)(DTNB) cause 34% and 42% inhibition, respectively. Functionally, catalyzes the hydrolysis of both aliphatic and aromatic N-carbamoyl-L-alpha-amino acids to free L-alpha-amino acids. Is strictly L-specific since it is inactive toward N-carbamoyl-D-alpha-amino acids. Is also able to hydrolyze N-formyl-L-methionine and N-acetyl-L-methionine, but not ureidosuccinate or 3-ureidopropanoate. The protein is N-carbamoyl-L-amino-acid amidohydrolase of Rhizobium meliloti (Ensifer meliloti).